A 117-amino-acid polypeptide reads, in one-letter code: Probable non-functional immunoglobulin heavy variable 1-38-4 (117 aa).

Positions 1–19 (MDWNWRILFLVVATTGAHS) are cleaved as a signal peptide. The tract at residues 20-44 (QVQLVQSWAEVRKSGASVKVSCSFS) is framework-1. The 98-residue stretch at 20-117 (QVQLVQSWAE…EDMAVYYYAR (98 aa)) folds into the Ig-like domain. A complementarity-determining-1 region spans residues 45-52 (GFTITSYG). The segment at 53–69 (IHWVQQSPGQGLEWMGW) is framework-2. Positions 70-77 (INPGNGSP) are complementarity-determining-2. Asn-74 is a glycosylation site (N-linked (GlcNAc...) asparagine). A framework-3 region spans residues 78–115 (SYAKKFQGRFTMTRDMSTTTAYTDLSSLTSEDMAVYYY). Positions 116–117 (AR) are complementarity-determining-3.

In terms of assembly, most probably, the immunoglobulin is not assembled due to incorrect folding of heavy chain. Immunoglobulins are composed of two identical heavy chains and two identical light chains; disulfide-linked.

The protein localises to the secreted. It localises to the cell membrane. Probable non-functional open reading frame (ORF) of V region of the variable domain of immunoglobulin heavy chains. Non-functional ORF generally cannot participate in the synthesis of a productive immunoglobulin chain due to altered V-(D)-J or switch recombination and/or splicing site (at mRNA level) and/or conserved amino acid change (protein level). Immunoglobulins, also known as antibodies, are membrane-bound or secreted glycoproteins produced by B lymphocytes. In the recognition phase of humoral immunity, the membrane-bound immunoglobulins serve as receptors which, upon binding of a specific antigen, trigger the clonal expansion and differentiation of B lymphocytes into immunoglobulins-secreting plasma cells. Secreted immunoglobulins mediate the effector phase of humoral immunity, which results in the elimination of bound antigens. The antigen binding site is formed by the variable domain of one heavy chain, together with that of its associated light chain. Thus, each immunoglobulin has two antigen binding sites with remarkable affinity for a particular antigen. The variable domains are assembled by a process called V-(D)-J rearrangement and can then be subjected to somatic hypermutations which, after exposure to antigen and selection, allow affinity maturation for a particular antigen. This chain is Probable non-functional immunoglobulin heavy variable 1-38-4, found in Homo sapiens (Human).